Reading from the N-terminus, the 274-residue chain is Thiamine kinase (274 aa).

Belongs to the thiamine kinase family.

It carries out the reaction thiamine + ATP = thiamine phosphate + ADP + H(+). The protein operates within cofactor biosynthesis; thiamine diphosphate biosynthesis; thiamine phosphate from thiamine: step 1/1. Its function is as follows. Catalyzes the ATP-dependent phosphorylation of thiamine to thiamine phosphate. Is involved in thiamine salvage. The chain is Thiamine kinase from Escherichia coli O6:K15:H31 (strain 536 / UPEC).